A 1977-amino-acid chain; its full sequence is Echinoderm microtubule-associated protein-like 5 (1977 aa).

WD repeat units lie at residues 59-100, 104-145, 148-187, 195-233, 235-273, 280-321, 323-362, 364-403, 406-445, 449-488, and 561-601; these read GHSD…TVSV, VHTH…MLSM, GHTD…LTPK, GDLQ…RTIQ, AHTA…TVID, GYKG…LIMQ, HCEG…LIAR, NMDE…EVVH, DRKE…KKVG, GSLS…EVTS, and GHSA…KLKD. Positions 609–629 are disordered; it reads ESLTESNSDESDSDLSDVPEL. A compositionally biased stretch (acidic residues) spans 615-629; the sequence is NSDESDSDLSDVPEL. 9 WD repeats span residues 725–766, 770–811, 814–853, 861–900, 901–940, 996–1035, 1038–1077, 1080–1120, and 1236–1276; these read GHDD…PLSI, YHQY…KLSV, GSKD…LIGR, GKND…KTVK, AHDG…KTYA, HMEG…CMLA, KLKK…DLVS, HRKD…RVGV, and AHST…HREK. Disordered regions lie at residues 1274–1299 and 1323–1363; these read REKK…SDVT and PHLQ…NVGK. Residues 1281–1294 show a composition bias toward acidic residues; the sequence is SEESDTDSEEDGGY. The span at 1326–1337 shows a compositional bias: basic and acidic residues; the sequence is QQKEPSVDERQG. 10 WD repeats span residues 1420 to 1471, 1475 to 1516, 1519 to 1558, 1568 to 1606, 1608 to 1654, 1699 to 1739, 1741 to 1782, 1783 to 1822, 1895 to 1934, and 1940 to 1977; these read EHND…TLSI, SHSK…KIAS, GHNQ…LLSK, ARMQ…RVVA, AHNG…RAFR, GHVD…MLNK, NLGH…GKKR, DRRC…TLNR, AEKA…KFAK, and GHSP…HTPH.

Belongs to the WD repeat EMAP family. As to expression, highly expressed in brain, especially in hippocampus, cerebellum and olfactory bulb (at protein level).

The protein resides in the cytoplasm. Its subcellular location is the cytoskeleton. Functionally, may modify the assembly dynamics of microtubules, such that microtubules are slightly longer, but more dynamic. In Rattus norvegicus (Rat), this protein is Echinoderm microtubule-associated protein-like 5 (Eml5).